The following is an 892-amino-acid chain: Alanine--tRNA ligase (892 aa).

H574, H578, C676, and H680 together coordinate Zn(2+).

It belongs to the class-II aminoacyl-tRNA synthetase family. It depends on Zn(2+) as a cofactor.

It is found in the cytoplasm. It carries out the reaction tRNA(Ala) + L-alanine + ATP = L-alanyl-tRNA(Ala) + AMP + diphosphate. Functionally, catalyzes the attachment of alanine to tRNA(Ala) in a two-step reaction: alanine is first activated by ATP to form Ala-AMP and then transferred to the acceptor end of tRNA(Ala). Also edits incorrectly charged Ser-tRNA(Ala) and Gly-tRNA(Ala) via its editing domain. The polypeptide is Alanine--tRNA ligase (Prochlorococcus marinus (strain SARG / CCMP1375 / SS120)).